Here is a 361-residue protein sequence, read N- to C-terminus: 5-formaminoimidazole-4-carboxamide-1-(beta)-D-ribofuranosyl 5'-monophosphate synthetase (361 aa).

5-amino-1-(5-phospho-beta-D-ribosyl)imidazole-4-carboxamide is bound by residues His27 and Ser94. Residues 116-348 (RQILRWEAER…MGQRIAKEIK (233 aa)) enclose the ATP-grasp domain. ATP-binding positions include 146 to 208 (PDEI…TNYC) and Glu230. Asn258 contacts 5-amino-1-(5-phospho-beta-D-ribosyl)imidazole-4-carboxamide. Mg(2+) is bound by residues Gln297 and Glu310.

Belongs to the phosphohexose mutase family. Mg(2+) serves as cofactor. Mn(2+) is required as a cofactor.

It carries out the reaction 5-amino-1-(5-phospho-beta-D-ribosyl)imidazole-4-carboxamide + formate + ATP = 5-formamido-1-(5-phospho-D-ribosyl)imidazole-4-carboxamide + ADP + phosphate. The protein operates within purine metabolism; IMP biosynthesis via de novo pathway; 5-formamido-1-(5-phospho-D-ribosyl)imidazole-4-carboxamide from 5-amino-1-(5-phospho-D-ribosyl)imidazole-4-carboxamide (formate route): step 1/1. Catalyzes the ATP- and formate-dependent formylation of 5-aminoimidazole-4-carboxamide-1-beta-d-ribofuranosyl 5'-monophosphate (AICAR) to 5-formaminoimidazole-4-carboxamide-1-beta-d-ribofuranosyl 5'-monophosphate (FAICAR) in the absence of folates. The polypeptide is 5-formaminoimidazole-4-carboxamide-1-(beta)-D-ribofuranosyl 5'-monophosphate synthetase (Methanococcus aeolicus (strain ATCC BAA-1280 / DSM 17508 / OCM 812 / Nankai-3)).